We begin with the raw amino-acid sequence, 601 residues long: Probable HECT-type ubiquitin ligase-interacting protein creD (601 aa).

2 disordered regions span residues 374–397 and 455–489; these read EVDP…GTLS and SADY…DHDH. Low complexity predominate over residues 461 to 473; the sequence is PSSGSNSHSPASP. Residues 475-489 are compositionally biased toward basic and acidic residues; the sequence is LSRRPSDEGYHDHDH.

It belongs to the arrestin family. Interacts with hulA.

Functionally, component of the regulatory network controlling carbon source utilization through ubiquitination and deubiquitination involving creA, creB, creC, creD and acrB. May be involved in signaling by recognizing appropriately phosphorylated substrates via its arrestin domains and then recruit a HECT-type ubiquitin ligase such as hulA, leading to ubiquitination of the substrate, providing a link between ubiquitination and phosphorylation in protein regulation and stability. This Neosartorya fischeri (strain ATCC 1020 / DSM 3700 / CBS 544.65 / FGSC A1164 / JCM 1740 / NRRL 181 / WB 181) (Aspergillus fischerianus) protein is Probable HECT-type ubiquitin ligase-interacting protein creD (creD).